Consider the following 262-residue polypeptide: Acyl-[acyl-carrier-protein]--UDP-N-acetylglucosamine O-acyltransferase (262 aa).

This sequence belongs to the transferase hexapeptide repeat family. LpxA subfamily. Homotrimer.

Its subcellular location is the cytoplasm. It catalyses the reaction a (3R)-hydroxyacyl-[ACP] + UDP-N-acetyl-alpha-D-glucosamine = a UDP-3-O-[(3R)-3-hydroxyacyl]-N-acetyl-alpha-D-glucosamine + holo-[ACP]. The protein operates within glycolipid biosynthesis; lipid IV(A) biosynthesis; lipid IV(A) from (3R)-3-hydroxytetradecanoyl-[acyl-carrier-protein] and UDP-N-acetyl-alpha-D-glucosamine: step 1/6. Involved in the biosynthesis of lipid A, a phosphorylated glycolipid that anchors the lipopolysaccharide to the outer membrane of the cell. This Salmonella heidelberg (strain SL476) protein is Acyl-[acyl-carrier-protein]--UDP-N-acetylglucosamine O-acyltransferase.